The following is a 471-amino-acid chain: ATP synthase subunit beta (471 aa).

Glycine 156–threonine 163 is a binding site for ATP.

The protein belongs to the ATPase alpha/beta chains family. F-type ATPases have 2 components, CF(1) - the catalytic core - and CF(0) - the membrane proton channel. CF(1) has five subunits: alpha(3), beta(3), gamma(1), delta(1), epsilon(1). CF(0) has three main subunits: a(1), b(2) and c(9-12). The alpha and beta chains form an alternating ring which encloses part of the gamma chain. CF(1) is attached to CF(0) by a central stalk formed by the gamma and epsilon chains, while a peripheral stalk is formed by the delta and b chains.

Its subcellular location is the cell membrane. It carries out the reaction ATP + H2O + 4 H(+)(in) = ADP + phosphate + 5 H(+)(out). In terms of biological role, produces ATP from ADP in the presence of a proton gradient across the membrane. The catalytic sites are hosted primarily by the beta subunits. The protein is ATP synthase subunit beta of Mycoplasmoides gallisepticum (strain R(low / passage 15 / clone 2)) (Mycoplasma gallisepticum).